Here is a 155-residue protein sequence, read N- to C-terminus: MSRRGTAEEKIEKSDPIYRNRLVNMLVNRILKHGKKSLAYQIIYRAMKKIQQKTETNPLSVLRQAIRGVTPDIAVKARRVGGSTHQVPIEIGSTQGKALAIRWLLGASRKRPGRNMAFKFSSELVDAAKGSGDAIRKKEETHRMAEANRAFAHFR.

The protein belongs to the universal ribosomal protein uS7 family. In terms of assembly, part of the 30S ribosomal subunit.

The protein localises to the plastid. The protein resides in the chloroplast. In terms of biological role, one of the primary rRNA binding proteins, it binds directly to 16S rRNA where it nucleates assembly of the head domain of the 30S subunit. The sequence is that of Small ribosomal subunit protein uS7cz/uS7cy (rps7-A) from Cucumis sativus (Cucumber).